Here is a 1670-residue protein sequence, read N- to C-terminus: Protein TASOR (1670 aa).

The disordered stretch occupies residues 1-110 (MATAVETEAC…QIPRKSREKK (110 aa)). Ala2 bears the N-acetylalanine mark. The span at 67 to 78 (QSLSHEQPQDSS) shows a compositional bias: polar residues. Ser344 carries the phosphoserine modification. Residue Lys586 forms a Glycyl lysine isopeptide (Lys-Gly) (interchain with G-Cter in SUMO2) linkage. Residues Ser633, Ser636, Ser673, and Ser800 each carry the phosphoserine modification. Glycyl lysine isopeptide (Lys-Gly) (interchain with G-Cter in SUMO2) cross-links involve residues Lys823 and Lys832. The residue at position 843 (Ser843) is a Phosphoserine. Lys872 participates in a covalent cross-link: Glycyl lysine isopeptide (Lys-Gly) (interchain with G-Cter in SUMO2). The interval 921–947 (TGGNARSPEDQLGKHGEKQTPGMKSPE) is disordered. Phosphoserine occurs at positions 927, 971, and 979. Residues 927-938 (SPEDQLGKHGEK) are compositionally biased toward basic and acidic residues. Thr982 and Thr1049 each carry phosphothreonine. Ser1103 is subject to Phosphoserine. The segment covering 1532–1545 (ETKGSRGTDQKKNT) has biased composition (basic and acidic residues). Disordered stretches follow at residues 1532 to 1558 (ETKGSRGTDQKKNTQIELQSSPDVQNS) and 1638 to 1670 (FLSAYTESLDRDKSPPPLSWGKSDSSRPYSQEK). Composition is skewed to polar residues over residues 1546–1558 (QIELQSSPDVQNS) and 1659–1670 (KSDSSRPYSQEK). Residue Ser1552 is modified to Phosphoserine.

This sequence belongs to the TASOR family. In terms of assembly, component of the HUSH complex; at least composed of TASOR, PPHLN1 and MPHOSPH8. Interacts with MORC2; the interaction associateS MORC2 with the HUSH complex which recruits MORC2 to heterochromatic loci. Interacts with ZNF638; leading to recruitment of the HUSH complex to unintegrated retroviral DNA. Interacts with INPP5A, EML1, SV1L, GPSM2, ITGB3BP, CNTN1, ETFA, PSMD8, S100A10, MPHOSPH8, TMEM100, ALB, PARPBP, HCFC2, NCBP1 and SETDB1.

It localises to the nucleus. The protein resides in the chromosome. Functionally, component of the HUSH complex, a multiprotein complex that mediates epigenetic repression. The HUSH complex is recruited to genomic loci rich in H3K9me3 and is required to maintain transcriptional silencing by promoting recruitment of SETDB1, a histone methyltransferase that mediates further deposition of H3K9me3, as well as MORC2. Also represses L1 retrotransposons in collaboration with MORC2 and, probably, SETDB1, the silencing is dependent of repressive epigenetic modifications, such as H3K9me3 mark. Silencing events often occur within introns of transcriptionally active genes, and lead to the down-regulation of host gene expression. The HUSH complex is also involved in the silencing of unintegrated retroviral DNA by being recruited by ZNF638: some part of the retroviral DNA formed immediately after infection remains unintegrated in the host genome and is transcriptionally repressed. Plays a crucial role in early embryonic development. Involved in the organization of spindle poles and spindle apparatus assembly during zygotic division. Plays an important role in maintaining epiblast fitness or potency. This chain is Protein TASOR, found in Homo sapiens (Human).